We begin with the raw amino-acid sequence, 161 residues long: Eukaryotic translation initiation factor 5A-1 (161 aa).

Lysine 54 is modified (hypusine).

It belongs to the eIF-5A family. Post-translationally, lys-54 undergoes hypusination, a unique post-translational modification that consists in the addition of a butylamino group from spermidine to lysine side chain, leading to the formation of the unusual amino acid hypusine. eIF-5As are the only known proteins to undergo this modification, which is essential for their function. As to expression, expressed specifically in the germline in the distal region of gonads where germ cells actively proliferate.

Its subcellular location is the cytoplasm. Functionally, translation factor that promotes translation elongation and termination, particularly upon ribosome stalling at specific amino acid sequence contexts. Binds between the exit (E) and peptidyl (P) site of the ribosome and promotes rescue of stalled ribosome: specifically required for efficient translation of polyproline-containing peptides as well as other motifs that stall the ribosome. Acts as a ribosome quality control (RQC) cofactor by joining the RQC complex to facilitate peptidyl transfer during CAT tailing step. Required for mitotic germ cell proliferation, gametogenesis after entry into meiosis, and localization of the P granule component pgl-1 on P granules. This chain is Eukaryotic translation initiation factor 5A-1 (iff-1), found in Caenorhabditis elegans.